The chain runs to 86 residues: Neurotoxin 3FTx-8a (86 aa).

An N-terminal signal peptide occupies residues M1–T21. Cystine bridges form between C24/C45, C27/C32, C38/C63, C67/C78, and C79/C84.

In terms of tissue distribution, expressed by the venom gland.

The protein resides in the secreted. In terms of biological role, binds with low affinity to muscular (alpha-1-beta-1-delta-epsilon/CHRNA1-CHRNB1-CHRND-CHRNE) and very low affinity to neuronal (alpha-7/CHRNA7) nicotinic acetylcholine receptor (nAChR). This Bungarus fasciatus (Banded krait) protein is Neurotoxin 3FTx-8a.